Here is a 237-residue protein sequence, read N- to C-terminus: Phosphoribosylaminoimidazole-succinocarboxamide synthase (237 aa).

Belongs to the SAICAR synthetase family.

It carries out the reaction 5-amino-1-(5-phospho-D-ribosyl)imidazole-4-carboxylate + L-aspartate + ATP = (2S)-2-[5-amino-1-(5-phospho-beta-D-ribosyl)imidazole-4-carboxamido]succinate + ADP + phosphate + 2 H(+). It participates in purine metabolism; IMP biosynthesis via de novo pathway; 5-amino-1-(5-phospho-D-ribosyl)imidazole-4-carboxamide from 5-amino-1-(5-phospho-D-ribosyl)imidazole-4-carboxylate: step 1/2. This Escherichia coli O127:H6 (strain E2348/69 / EPEC) protein is Phosphoribosylaminoimidazole-succinocarboxamide synthase.